A 159-amino-acid chain; its full sequence is MADRPQQLQVHPQRGHGHYEGGIKNQRGGGPSAVKVMAVLAALPVGGTLLALAGLTLAGSVIGLLVTSPLFIIFSPVLVPAAIVVGLAVASFLSSGALGLTGLSSLSWVLNYLRCASQSLPREMDQAKRRMQDMAAFVGQKTREVGQEIQSRAQEGRRT.

The span at 1–10 shows a compositional bias: polar residues; sequence MADRPQQLQV. The segment at 1–24 is disordered; sequence MADRPQQLQVHPQRGHGHYEGGIK. The next 3 membrane-spanning stretches (helical) occupy residues 45–65, 70–90, and 92–112; these read VGGTLLALAGLTLAGSVIGLL, LFIIFSPVLVPAAIVVGLAVA, and FLSSGALGLTGLSSLSWVLNY.

It belongs to the oleosin family. Expressed in seeds.

It localises to the lipid droplet. The protein resides in the membrane. Its function is as follows. May have a structural role to stabilize the lipid body during desiccation of the seed by preventing coalescence of the oil. Probably interacts with both lipid and phospholipid moieties of lipid bodies. May also provide recognition signals for specific lipase anchorage in lipolysis during seedling growth. The protein is Oleosin Cor a 12 of Corylus avellana (European hazel).